The following is a 490-amino-acid chain: 23S rRNA (uracil(1939)-C(5))-methyltransferase RlmD (490 aa).

A TRAM domain is found at 14 to 75; it reads APAPAEYPID…SSFEKATLTA (62 aa). Cys-88, Cys-98, Cys-101, and Cys-180 together coordinate [4Fe-4S] cluster. S-adenosyl-L-methionine contacts are provided by Gln-289, Phe-318, Asn-323, Glu-339, Asn-374, and Asp-395. The active-site Nucleophile is the Cys-446.

Belongs to the class I-like SAM-binding methyltransferase superfamily. RNA M5U methyltransferase family. RlmD subfamily.

It catalyses the reaction uridine(1939) in 23S rRNA + S-adenosyl-L-methionine = 5-methyluridine(1939) in 23S rRNA + S-adenosyl-L-homocysteine + H(+). Functionally, catalyzes the formation of 5-methyl-uridine at position 1939 (m5U1939) in 23S rRNA. The sequence is that of 23S rRNA (uracil(1939)-C(5))-methyltransferase RlmD from Polaromonas naphthalenivorans (strain CJ2).